A 620-amino-acid polypeptide reads, in one-letter code: 1-deoxy-D-xylulose-5-phosphate synthase (620 aa).

Thiamine diphosphate contacts are provided by residues His80 and 121 to 123 (GHS). Asp152 lines the Mg(2+) pocket. Thiamine diphosphate is bound by residues 153–154 (GA), Asn181, Tyr288, and Glu370. Asn181 contributes to the Mg(2+) binding site.

The protein belongs to the transketolase family. DXPS subfamily. In terms of assembly, homodimer. Mg(2+) serves as cofactor. Thiamine diphosphate is required as a cofactor.

The catalysed reaction is D-glyceraldehyde 3-phosphate + pyruvate + H(+) = 1-deoxy-D-xylulose 5-phosphate + CO2. The protein operates within metabolic intermediate biosynthesis; 1-deoxy-D-xylulose 5-phosphate biosynthesis; 1-deoxy-D-xylulose 5-phosphate from D-glyceraldehyde 3-phosphate and pyruvate: step 1/1. Functionally, catalyzes the acyloin condensation reaction between C atoms 2 and 3 of pyruvate and glyceraldehyde 3-phosphate to yield 1-deoxy-D-xylulose-5-phosphate (DXP). The polypeptide is 1-deoxy-D-xylulose-5-phosphate synthase (Enterobacter sp. (strain 638)).